Consider the following 183-residue polypeptide: Capsid protein (183 aa).

The tract at residues 136-183 (NAPILSTLPETTVVRRRGRSPRRRTPSPRRRRSESPRRRRSQSRESQC) is disordered. Residues 149–176 (VRRRGRSPRRRTPSPRRRRSESPRRRRS) are compositionally biased toward basic residues. A phosphoserine; by host mark is found at Ser155, Ser162, and Ser170. One copy of the 1; half-length repeat lies at 155–160 (SPRRRT). Residues 155–176 (SPRRRTPSPRRRRSESPRRRRS) form a 3 X 7 AA repeats of S-P-R-R-R-[PR]-S region. Positions 158–175 (RRTPSPRRRRSESPRRRR) match the Bipartite nuclear localization signal motif. 2 consecutive repeat copies span residues 162–168 (SPRRRRS) and 170–176 (SPRRRRS). Residues 177–183 (QSRESQC) form an RNA binding region.

It belongs to the orthohepadnavirus core antigen family. Homodimerizes, then multimerizes. Interacts with cytosol exposed regions of viral L glycoprotein present in the reticulum-to-Golgi compartment. Interacts with human FLNB. Phosphorylated form interacts with host importin alpha; this interaction depends on the exposure of the NLS, which itself depends upon genome maturation and/or phosphorylation of the capsid protein. Interacts with host NUP153. Phosphorylated by host SRPK1, SRPK2, and maybe protein kinase C or GAPDH. Phosphorylation is critical for pregenomic RNA packaging. Protein kinase C phosphorylation is stimulated by HBx protein and may play a role in transport of the viral genome to the nucleus at the late step during the viral replication cycle.

The protein localises to the virion. The protein resides in the host cytoplasm. Its function is as follows. Self assembles to form an icosahedral capsid. Most capsids appear to be large particles with an icosahedral symmetry of T=4 and consist of 240 copies of capsid protein, though a fraction forms smaller T=3 particles consisting of 180 capsid proteins. Entering capsids are transported along microtubules to the nucleus. Phosphorylation of the capsid is thought to induce exposure of nuclear localization signal in the C-terminal portion of the capsid protein that allows binding to the nuclear pore complex via the importin (karyopherin-) alpha and beta. Capsids are imported in intact form through the nuclear pore into the nuclear basket, where it probably binds NUP153. Only capsids that contain the mature viral genome can release the viral DNA and capsid protein into the nucleoplasm. Immature capsids get stuck in the basket. Capsids encapsulate the pre-genomic RNA and the P protein. Pre-genomic RNA is reverse-transcribed into DNA while the capsid is still in the cytoplasm. The capsid can then either be directed to the nucleus, providing more genomes for transcription, or bud through the endoplasmic reticulum to provide new virions. This Homo sapiens (Human) protein is Capsid protein.